The following is a 333-amino-acid chain: Methylosome protein WDR77 (333 aa).

WD repeat units lie at residues 16 to 59 (CMEV…GAPN), 68 to 106 (QTEAGVTDVAWVSEKGILVASDSGAVELWEILEKESLLV), 113 to 152 (EHDDIVKTLSVFSDGTQAVSGGKDFSVKVWDLSQKAVLKS), 155 to 195 (AHSS…PATR), 199 to 240 (CASD…SAQT), 243 to 283 (VHSQ…VFRD), and 285 to 328 (SHRD…NLIA).

In terms of assembly, heterotetramer; dimer of heterodimer with prmt5. Interacts with histone h2a and h4 and with nucleoplasmin. In terms of tissue distribution, detected in egg (at protein level).

Its subcellular location is the cytoplasm. The protein localises to the nucleus. Functionally, non-catalytic component of the 20S prmt5-containing methyltransferase complex, which modifies specific arginines to dimethylarginines in several spliceosomal Sm proteins and histones. Required for normal prmt5 methyltransferase activity. The chain is Methylosome protein WDR77 from Xenopus laevis (African clawed frog).